Consider the following 378-residue polypeptide: Acyl-coenzyme A diphosphatase NUDT19 (378 aa).

The 252-residue stretch at His7–Tyr258 folds into the Nudix hydrolase domain. The Nudix box motif lies at Ser105–Gly126. The Mg(2+) site is built by Glu120 and Glu124. Residues Ser376 to Leu378 carry the Microbody targeting signal motif.

The protein belongs to the Nudix hydrolase family. In terms of assembly, monomer. Requires Mg(2+) as cofactor. Mn(2+) serves as cofactor.

Its subcellular location is the peroxisome. The enzyme catalyses an acyl-CoA + H2O = an acyl-4'-phosphopantetheine + adenosine 3',5'-bisphosphate + 2 H(+). It catalyses the reaction CoA + H2O = (R)-4'-phosphopantetheine + adenosine 3',5'-bisphosphate + 2 H(+). The catalysed reaction is hexanoyl-CoA + H2O = hexanoyl-4'-phosphopantetheine + adenosine 3',5'-bisphosphate + 2 H(+). It carries out the reaction octanoyl-CoA + H2O = S-octanoyl-4'-phosphopantetheine + adenosine 3',5'-bisphosphate + 2 H(+). The enzyme catalyses butanoyl-CoA + H2O = S-butanoyl-4'-phosphopantetheine + adenosine 3',5'-bisphosphate + 2 H(+). It catalyses the reaction propanoyl-CoA + H2O = propanoyl-4'-phosphopantetheine + adenosine 3',5'-bisphosphate + 2 H(+). The catalysed reaction is malonyl-CoA + H2O = malonyl-4'-phosphopantetheine + adenosine 3',5'-bisphosphate + 2 H(+). It carries out the reaction succinyl-CoA + H2O = succinyl-4'-phosphopantetheine + adenosine 3',5'-bisphosphate + 2 H(+). The enzyme catalyses choloyl-CoA + H2O = S-choloyl-4'-phosphopantetheine + adenosine 3',5'-bisphosphate + 2 H(+). It catalyses the reaction 4,8-dimethylnonanoyl-CoA + H2O = S-(4,8-dimethylnonanoyl)-4'-phosphopantetheine + adenosine 3',5'-bisphosphate + 2 H(+). The catalysed reaction is (9Z,12Z,15Z)-octadecatrienoyl-CoA + H2O = S-(9Z,12Z,15Z-octadecatrienoyl)-4'-phosphopantetheine + adenosine 3',5'-bisphosphate + 2 H(+). It carries out the reaction (9Z,12Z)-octadecadienoyl-CoA + H2O = S-(9Z,12Z-octadecadienoyl)-4'-phosphopantetheine + adenosine 3',5'-bisphosphate + 2 H(+). The enzyme catalyses (9Z)-hexadecenoyl-CoA + H2O = S-(9Z-hexadecenoyl)-4'-phosphopantetheine + adenosine 3',5'-bisphosphate + 2 H(+). It catalyses the reaction (9Z)-tetradecenoyl-CoA + H2O = S-(9Z-tetradecenoyl)-4'-phosphopantetheine + adenosine 3',5'-bisphosphate + 2 H(+). The catalysed reaction is (6Z)-octenoyl-CoA + H2O = S-(6Z-octenoyl)-4'-phosphopantetheine + adenosine 3',5'-bisphosphate + 2 H(+). It carries out the reaction hexadecanoyl-CoA + H2O = S-hexadecanoyl-4'-phosphopantetheine + adenosine 3',5'-bisphosphate + 2 H(+). The enzyme catalyses tetradecanoyl-CoA + H2O = tetradecanoyl-4'-phosphopantetheine + adenosine 3',5'-bisphosphate + 2 H(+). It catalyses the reaction dodecanoyl-CoA + H2O = S-dodecanoyl-4'-phosphopantetheine + adenosine 3',5'-bisphosphate + 2 H(+). The catalysed reaction is a 5'-end CoA-ribonucleoside in mRNA + H2O = a 5'-end phospho-adenosine-phospho-ribonucleoside in mRNA + (R)-4'-phosphopantetheine + 2 H(+). Fatty acyl-coenzyme A (CoA) diphosphatase that hydrolyzes fatty acyl-CoA to yield acyl-4'-phosphopantetheine and adenosine 3',5'-bisphosphate. Mediates the hydrolysis of a wide range of CoA esters, including choloyl-CoA and branched-chain fatty-acyl-CoA esters and at low substrate concentrations medium and long-chain fatty-acyl-CoA esters are the primary substrates. Highest activity seen with medium-chain acyl-CoA esters and higher rates of activity seen with the unsaturated acyl-CoA esters compared with the saturated esters. Exhibits decapping activity towards dpCoA-capped RNAs in vitro. This Gallus gallus (Chicken) protein is Acyl-coenzyme A diphosphatase NUDT19 (NUDT19).